We begin with the raw amino-acid sequence, 264 residues long: Glutamate racemase (264 aa).

Substrate is bound by residues 10-11 and 42-43; these read DS and YG. Catalysis depends on C73, which acts as the Proton donor/acceptor. Substrate is bound at residue 74–75; that stretch reads NT. C183 (proton donor/acceptor) is an active-site residue. A substrate-binding site is contributed by 184 to 185; the sequence is TH.

It belongs to the aspartate/glutamate racemases family.

The catalysed reaction is L-glutamate = D-glutamate. Its pathway is cell wall biogenesis; peptidoglycan biosynthesis. Its function is as follows. Provides the (R)-glutamate required for cell wall biosynthesis. This Streptococcus pyogenes serotype M6 (strain ATCC BAA-946 / MGAS10394) protein is Glutamate racemase.